Consider the following 321-residue polypeptide: Queuosine 5'-phosphate N-glycosylase/hydrolase (321 aa).

Positions 227, 229, and 296 each coordinate queuine. Aspartate 229 functions as the Nucleophile or transition state stabilizer in the catalytic mechanism.

Belongs to the QNG1 protein family.

It catalyses the reaction queuosine 5'-phosphate + H2O = queuine + D-ribose 5-phosphate. In terms of biological role, catalyzes the hydrolysis of queuosine 5'-phosphate, releasing the nucleobase queuine (q). Is required for salvage of queuine from exogenous queuosine (Q) that is imported and then converted to queuosine 5'-phosphate intracellularly. In Dictyostelium discoideum (Social amoeba), this protein is Queuosine 5'-phosphate N-glycosylase/hydrolase.